Reading from the N-terminus, the 121-residue chain is DNA-directed RNA polymerase subunit omega (121 aa).

Positions 95–121 are disordered; sequence DGDAANDLQGEEDDLGLGLDEAEDLGF. A compositionally biased stretch (acidic residues) spans 103–121; the sequence is QGEEDDLGLGLDEAEDLGF.

Belongs to the RNA polymerase subunit omega family. The RNAP catalytic core consists of 2 alpha, 1 beta, 1 beta' and 1 omega subunit. When a sigma factor is associated with the core the holoenzyme is formed, which can initiate transcription.

The enzyme catalyses RNA(n) + a ribonucleoside 5'-triphosphate = RNA(n+1) + diphosphate. In terms of biological role, promotes RNA polymerase assembly. Latches the N- and C-terminal regions of the beta' subunit thereby facilitating its interaction with the beta and alpha subunits. The polypeptide is DNA-directed RNA polymerase subunit omega (Magnetococcus marinus (strain ATCC BAA-1437 / JCM 17883 / MC-1)).